We begin with the raw amino-acid sequence, 91 residues long: DNA-directed RNA polymerase subunit omega (91 aa).

The protein belongs to the RNA polymerase subunit omega family. As to quaternary structure, the RNAP catalytic core consists of 2 alpha, 1 beta, 1 beta' and 1 omega subunit. When a sigma factor is associated with the core the holoenzyme is formed, which can initiate transcription.

It catalyses the reaction RNA(n) + a ribonucleoside 5'-triphosphate = RNA(n+1) + diphosphate. Promotes RNA polymerase assembly. Latches the N- and C-terminal regions of the beta' subunit thereby facilitating its interaction with the beta and alpha subunits. The protein is DNA-directed RNA polymerase subunit omega of Pseudoalteromonas translucida (strain TAC 125).